Reading from the N-terminus, the 217-residue chain is Enolase-phosphatase E1 (217 aa).

The Mg(2+) site is built by D9 and E11. Residues 112–113 and K151 each bind substrate; that span reads SS. Position 176 (D176) interacts with Mg(2+).

The protein belongs to the HAD-like hydrolase superfamily. MasA/MtnC family. As to quaternary structure, monomer. Requires Mg(2+) as cofactor.

The protein localises to the cytoplasm. Its subcellular location is the nucleus. The catalysed reaction is 5-methylsulfanyl-2,3-dioxopentyl phosphate + H2O = 1,2-dihydroxy-5-(methylsulfanyl)pent-1-en-3-one + phosphate. The protein operates within amino-acid biosynthesis; L-methionine biosynthesis via salvage pathway; L-methionine from S-methyl-5-thio-alpha-D-ribose 1-phosphate: step 3/6. It participates in amino-acid biosynthesis; L-methionine biosynthesis via salvage pathway; L-methionine from S-methyl-5-thio-alpha-D-ribose 1-phosphate: step 4/6. In terms of biological role, bifunctional enzyme that catalyzes the enolization of 2,3-diketo-5-methylthiopentyl-1-phosphate (DK-MTP-1-P) into the intermediate 2-hydroxy-3-keto-5-methylthiopentenyl-1-phosphate (HK-MTPenyl-1-P), which is then dephosphorylated to form the acireductone 1,2-dihydroxy-3-keto-5-methylthiopentene (DHK-MTPene). In Lachancea thermotolerans (strain ATCC 56472 / CBS 6340 / NRRL Y-8284) (Yeast), this protein is Enolase-phosphatase E1.